A 519-amino-acid polypeptide reads, in one-letter code: General transcription factor 3C polypeptide 5 (519 aa).

N-acetylalanine is present on Ala2. Residues 465 to 519 are disordered; the sequence is ALFSSSAKADGGKEQLTYESGEDEEDEEEEEEEEEDFKPSDGSENEMETEILDYV. Composition is skewed to acidic residues over residues 484-500 and 507-519; these read SGED…EEED and SENE…LDYV.

Belongs to the TFIIIC subunit 5 family. Part of the TFIIIC subcomplex TFIIIC2, consisting of six subunits, GTF3C1, GTF3C2, GTF3C3, GTF3C4, GTF3C5 and GTF3C6. Interacts with BRF1, GTF3C6 and TBP.

It localises to the nucleus. Its function is as follows. Involved in RNA polymerase III-mediated transcription. Integral, tightly associated component of the DNA-binding TFIIIC2 subcomplex that directly binds tRNA and virus-associated RNA promoters. The protein is General transcription factor 3C polypeptide 5 (GTF3C5) of Homo sapiens (Human).